The primary structure comprises 132 residues: Small ribosomal subunit protein eS6 (132 aa).

It belongs to the eukaryotic ribosomal protein eS6 family.

The protein is Small ribosomal subunit protein eS6 of Methanoculleus marisnigri (strain ATCC 35101 / DSM 1498 / JR1).